The sequence spans 309 residues: 4-hydroxy-3-methylbut-2-enyl diphosphate reductase (309 aa).

Position 12 (Cys-12) interacts with [4Fe-4S] cluster. Residues His-41 and His-74 each contribute to the (2E)-4-hydroxy-3-methylbut-2-enyl diphosphate site. Dimethylallyl diphosphate contacts are provided by His-41 and His-74. Isopentenyl diphosphate is bound by residues His-41 and His-74. Cys-96 contacts [4Fe-4S] cluster. (2E)-4-hydroxy-3-methylbut-2-enyl diphosphate is bound at residue His-124. Position 124 (His-124) interacts with dimethylallyl diphosphate. His-124 is an isopentenyl diphosphate binding site. Glu-126 serves as the catalytic Proton donor. Thr-167 serves as a coordination point for (2E)-4-hydroxy-3-methylbut-2-enyl diphosphate. Cys-197 is a [4Fe-4S] cluster binding site. Positions 225, 226, 227, and 269 each coordinate (2E)-4-hydroxy-3-methylbut-2-enyl diphosphate. 4 residues coordinate dimethylallyl diphosphate: Ser-225, Ser-226, Asn-227, and Ser-269. 4 residues coordinate isopentenyl diphosphate: Ser-225, Ser-226, Asn-227, and Ser-269.

The protein belongs to the IspH family. Requires [4Fe-4S] cluster as cofactor.

The catalysed reaction is isopentenyl diphosphate + 2 oxidized [2Fe-2S]-[ferredoxin] + H2O = (2E)-4-hydroxy-3-methylbut-2-enyl diphosphate + 2 reduced [2Fe-2S]-[ferredoxin] + 2 H(+). It catalyses the reaction dimethylallyl diphosphate + 2 oxidized [2Fe-2S]-[ferredoxin] + H2O = (2E)-4-hydroxy-3-methylbut-2-enyl diphosphate + 2 reduced [2Fe-2S]-[ferredoxin] + 2 H(+). The protein operates within isoprenoid biosynthesis; dimethylallyl diphosphate biosynthesis; dimethylallyl diphosphate from (2E)-4-hydroxy-3-methylbutenyl diphosphate: step 1/1. It participates in isoprenoid biosynthesis; isopentenyl diphosphate biosynthesis via DXP pathway; isopentenyl diphosphate from 1-deoxy-D-xylulose 5-phosphate: step 6/6. Functionally, catalyzes the conversion of 1-hydroxy-2-methyl-2-(E)-butenyl 4-diphosphate (HMBPP) into a mixture of isopentenyl diphosphate (IPP) and dimethylallyl diphosphate (DMAPP). Acts in the terminal step of the DOXP/MEP pathway for isoprenoid precursor biosynthesis. The sequence is that of 4-hydroxy-3-methylbut-2-enyl diphosphate reductase from Colwellia psychrerythraea (strain 34H / ATCC BAA-681) (Vibrio psychroerythus).